The sequence spans 429 residues: 3-phosphoshikimate 1-carboxyvinyltransferase (429 aa).

Residues lysine 23, serine 24, and arginine 28 each contribute to the 3-phosphoshikimate site. Phosphoenolpyruvate is bound at residue lysine 23. Glycine 95 and arginine 123 together coordinate phosphoenolpyruvate. 3-phosphoshikimate-binding residues include serine 168, glutamine 170, aspartate 316, and lysine 343. Glutamine 170 lines the phosphoenolpyruvate pocket. Residue aspartate 316 is the Proton acceptor of the active site. Phosphoenolpyruvate-binding residues include arginine 347 and arginine 389.

Belongs to the EPSP synthase family. In terms of assembly, monomer.

It localises to the cytoplasm. The catalysed reaction is 3-phosphoshikimate + phosphoenolpyruvate = 5-O-(1-carboxyvinyl)-3-phosphoshikimate + phosphate. The protein operates within metabolic intermediate biosynthesis; chorismate biosynthesis; chorismate from D-erythrose 4-phosphate and phosphoenolpyruvate: step 6/7. Catalyzes the transfer of the enolpyruvyl moiety of phosphoenolpyruvate (PEP) to the 5-hydroxyl of shikimate-3-phosphate (S3P) to produce enolpyruvyl shikimate-3-phosphate and inorganic phosphate. The protein is 3-phosphoshikimate 1-carboxyvinyltransferase of Bacillus cereus (strain G9842).